The primary structure comprises 72 residues: uncharacterized protein (72 aa).

This is an uncharacterized protein from Mycobacterium tuberculosis (strain ATCC 25618 / H37Rv).